The chain runs to 452 residues: UDP-glycosyltransferase 76D1 (452 aa).

UDP-alpha-D-glucose is bound by residues serine 269, 329 to 331, 346 to 354, and 368 to 371; these read APQ, HGGWNSCLE, and SGDQ.

It belongs to the UDP-glycosyltransferase family.

Functionally, possesses low quercetin 7-O-glucosyltransferase activity in vitro. The protein is UDP-glycosyltransferase 76D1 (UGT76D1) of Arabidopsis thaliana (Mouse-ear cress).